Consider the following 245-residue polypeptide: Spore membrane assembly protein 1 (245 aa).

In terms of biological role, involved in spore and ascus formation. Required for the efficient assembly of the precursors of the prospore membrane to a continuous prospore membrane. This is Spore membrane assembly protein 1 (SMA1) from Saccharomyces cerevisiae (strain ATCC 204508 / S288c) (Baker's yeast).